The following is a 242-amino-acid chain: Phosphomannomutase 2 (242 aa).

Aspartate 8 serves as the catalytic Nucleophile. Mg(2+)-binding residues include aspartate 8 and aspartate 10. The active-site Proton donor/acceptor is aspartate 10. The alpha-D-mannose 1-phosphate site is built by arginine 17, arginine 119, arginine 130, and arginine 137. The residue at position 145 (lysine 145) is an N6-acetyllysine. Alpha-D-mannose 1-phosphate is bound by residues serine 175 and aspartate 177. Aspartate 205, phenylalanine 217, aspartate 219, and threonine 222 together coordinate Mg(2+).

It belongs to the eukaryotic PMM family. Homodimer.

The protein localises to the cytoplasm. It carries out the reaction alpha-D-mannose 1-phosphate = D-mannose 6-phosphate. It functions in the pathway nucleotide-sugar biosynthesis; GDP-alpha-D-mannose biosynthesis; alpha-D-mannose 1-phosphate from D-fructose 6-phosphate: step 2/2. Its function is as follows. Involved in the synthesis of the GDP-mannose and dolichol-phosphate-mannose required for a number of critical mannosyl transfer reactions. The protein is Phosphomannomutase 2 (Pmm2) of Mus musculus (Mouse).